An 826-amino-acid chain; its full sequence is Arf-GAP with ANK repeat and PH domain-containing protein cnt-1 (826 aa).

Residues 275-373 form the PH domain; the sequence is DVMMEGYLYK…WMRALQRTIL (99 aa). The Arf-GAP domain maps to 447-572; sequence TTAFEQVRRV…RFAVAEDTRA (126 aa). Residues 462–485 form a C4-type zinc finger; it reads CADCGSPAPKWVSINLGVVLCIEC. Residues 570–604 are disordered; that stretch reads TRARSSATNRQEHLKHKTSIGGNSSSNGVNRSSSY. Low complexity predominate over residues 588–603; it reads SIGGNSSSNGVNRSSS. 3 ANK repeats span residues 690–719, 723–752, and 756–789; these read NGTT…KINM, KLNT…DSNL, and DSKT…NADF.

Interacts (via C-terminal ankyrin repeat) with rab-10 (GTP-bound form); the interaction is required for cnt-1 recruitment to endosomes. Interacts (via C-terminal ankyrin repeat) with rab-8 (GTP-bound form) and rab-35 (GTP-bound form). Cleaved by caspase ced-3 after Asp-382 and Asp-609. Cleavage at Asp-382 is required for subsequent cleavage at Asp-609.

It localises to the cytoplasm. The protein resides in the recycling endosome membrane. The protein localises to the basolateral cell membrane. It is found in the apical cell membrane. Its subcellular location is the cell membrane. In terms of biological role, GTPase-activating protein for the ADP ribosylation factor family. Regulates endosome recycling downstream of rab-10 and upstream of arf-6. Promotes apoptosis during embryonic development. Produced by caspase ced-3-mediated cleavage, and translocates to the plasma membrane where it prevents the activation of the prosurvival Akt-1/2 and sgk-1 signaling pathway by competing with Akt-1/2 for the binding to PtdIns(3,4,5)P3. This Caenorhabditis elegans protein is Arf-GAP with ANK repeat and PH domain-containing protein cnt-1.